The chain runs to 85 residues: uncharacterized protein (85 aa).

Its subcellular location is the mitochondrion. This is an uncharacterized protein from Paramecium tetraurelia.